We begin with the raw amino-acid sequence, 105 residues long: Replication restart protein PriB (105 aa).

Residues 1-102 (MTANRLTLSG…LHAEQIELID (102 aa)) enclose the SSB domain.

This sequence belongs to the PriB family. In terms of assembly, homodimer. Interacts with PriA and DnaT. Component of the replication restart primosome. Primosome assembly occurs via a 'hand-off' mechanism. PriA binds to replication forks, subsequently PriB then DnaT bind; DnaT then displaces ssDNA to generate the helicase loading substrate.

Functionally, involved in the restart of stalled replication forks, which reloads the replicative helicase on sites other than the origin of replication; the PriA-PriB pathway is the major replication restart pathway. During primosome assembly it facilitates complex formation between PriA and DnaT on DNA; stabilizes PriA on DNA. Stimulates the DNA unwinding activity of PriA helicase. The polypeptide is Replication restart protein PriB (Serratia proteamaculans (strain 568)).